Reading from the N-terminus, the 151-residue chain is MARLHSGKRGSSGSTRPLRTEVPEWVSMSAEEIEAKIVEMAKDGKQSAIIGNILRDMYGVPNVKLITGKSVSSIMKEAGFYAEVPEDLFNLMKKAINLRNHLENNPRDTHSTVGLKLIESKIRRLVKYYRGTKVLPAKWRYSPETARLLVE.

The segment at 1 to 20 is disordered; sequence MARLHSGKRGSSGSTRPLRT.

It belongs to the universal ribosomal protein uS15 family. In terms of assembly, part of the 30S ribosomal subunit.

The chain is Small ribosomal subunit protein uS15 from Methanococcus maripaludis (strain C5 / ATCC BAA-1333).